Reading from the N-terminus, the 637-residue chain is Nuclear receptor subfamily 2 group C member 1-B (637 aa).

Residues 149–224 (VELCVVCGDK…LGMKQDSVQC (76 aa)) constitute a DNA-binding region (nuclear receptor). NR C4-type zinc fingers lie at residues 152 to 172 (CVVCGDKASGRHYGAVTCEGC) and 188 to 207 (CRGSKDCVINKHYRNRCQYC). The NR LBD domain maps to 383–624 (CVGSGSNLLP…SIIPYILRME (242 aa)).

This sequence belongs to the nuclear hormone receptor family. NR2 subfamily.

The protein localises to the nucleus. Its function is as follows. Orphan nuclear receptor. Binds the IR7 element in the promoter of its own gene in an autoregulatory negative feedback mechanism. Primarily repressor of a broad range of genes. Binds to hormone response elements (HREs) consisting of two 5'-AGGTCA-3' half site direct repeat consensus sequences. The chain is Nuclear receptor subfamily 2 group C member 1-B (nr2c1-b) from Xenopus laevis (African clawed frog).